Reading from the N-terminus, the 504-residue chain is ATP synthase subunit alpha, chloroplastic (504 aa).

An ATP-binding site is contributed by 170 to 177 (GDRQTGKT).

It belongs to the ATPase alpha/beta chains family. In terms of assembly, F-type ATPases have 2 components, CF(1) - the catalytic core - and CF(0) - the membrane proton channel. CF(1) has five subunits: alpha(3), beta(3), gamma(1), delta(1), epsilon(1). CF(0) has four main subunits: a, b, b' and c.

The protein resides in the plastid. The protein localises to the chloroplast thylakoid membrane. The enzyme catalyses ATP + H2O + 4 H(+)(in) = ADP + phosphate + 5 H(+)(out). Its function is as follows. Produces ATP from ADP in the presence of a proton gradient across the membrane. The alpha chain is a regulatory subunit. The sequence is that of ATP synthase subunit alpha, chloroplastic from Cyanidium caldarium (Red alga).